Consider the following 589-residue polypeptide: Aspartate--tRNA ligase 2 (589 aa).

L-aspartate is bound at residue Glu-174. The tract at residues 198–201 is aspartate; it reads QITK. Arg-220 lines the L-aspartate pocket. Residues 220–222 and Gln-229 each bind ATP; that span reads RDE. His-443 is a binding site for L-aspartate. ATP is bound at residue Glu-477. Arg-484 is a binding site for L-aspartate. 529-532 is a binding site for ATP; it reads GLDR.

Belongs to the class-II aminoacyl-tRNA synthetase family. Type 1 subfamily. As to quaternary structure, homodimer.

Its subcellular location is the cytoplasm. It carries out the reaction tRNA(Asp) + L-aspartate + ATP = L-aspartyl-tRNA(Asp) + AMP + diphosphate. In terms of biological role, catalyzes the attachment of L-aspartate to tRNA(Asp) in a two-step reaction: L-aspartate is first activated by ATP to form Asp-AMP and then transferred to the acceptor end of tRNA(Asp). In Streptococcus mutans serotype c (strain ATCC 700610 / UA159), this protein is Aspartate--tRNA ligase 2.